A 394-amino-acid chain; its full sequence is 5-azacytidine-induced protein 2 (394 aa).

Residues 1 to 197 (MDALVEDDIC…IELRKAKQTD (197 aa)) are homodimerization. 2 coiled-coil regions span residues 40 to 76 (ALVTAYEDIKKRLKDSEKENSLLKKRIRFLEEKLIAR) and 102 to 196 (DRDN…AKQT). Residues 216 to 257 (SDNMQHAYWELKREMSNLHLVTQVQAELLRKLKTSTAIKKAC) are interaction with TBK1 and IKBKE. Phosphoserine occurs at positions 318 and 355. The disordered stretch occupies residues 355-379 (SPPKSSETAFGETKSKTLPLPNLPP).

In terms of assembly, homodimer. Interacts with IKBKE, TBK1 and TICAM1. Interacts with TAX1BP1. Interacts with CALCOCO2. Ubiquitinated via 'Lys-48'-linked polyubiquitination by TRIM38, leading to its degradation.

The protein resides in the cytoplasm. Functionally, adapter protein which binds TBK1 and IKBKE playing a role in antiviral innate immunity. Activates serine/threonine-protein kinase TBK1 and facilitates its oligomerization. Enhances the phosphorylation of NF-kappa-B p65 subunit RELA by TBK1. Promotes TBK1-induced as well as TNF-alpha or PMA-induced activation of NF-kappa-B. Participates in IFNB promoter activation via TICAM1. The polypeptide is 5-azacytidine-induced protein 2 (AZI2) (Macaca fascicularis (Crab-eating macaque)).